A 456-amino-acid polypeptide reads, in one-letter code: Bifunctional protein GlmU (456 aa).

Residues 1–228 (MPQNTLNTVI…SHLAAGVNNK (228 aa)) are pyrophosphorylase. UDP-N-acetyl-alpha-D-glucosamine contacts are provided by residues 11 to 14 (LAAG), lysine 25, glutamine 75, 80 to 81 (GT), 102 to 104 (YGD), glycine 138, glutamate 153, asparagine 168, and asparagine 226. A Mg(2+)-binding site is contributed by aspartate 104. Mg(2+) is bound at residue asparagine 226. The linker stretch occupies residues 229–249 (RQLAELERIFQTEQAQELLKA). The tract at residues 250–456 (GVTLRDPARF…GWVRPEKNKQ (207 aa)) is N-acetyltransferase. Residues arginine 332 and lysine 350 each contribute to the UDP-N-acetyl-alpha-D-glucosamine site. The active-site Proton acceptor is histidine 362. Positions 365 and 376 each coordinate UDP-N-acetyl-alpha-D-glucosamine. Residues alanine 379, 385 to 386 (NY), serine 404, alanine 422, and arginine 439 contribute to the acetyl-CoA site.

This sequence in the N-terminal section; belongs to the N-acetylglucosamine-1-phosphate uridyltransferase family. In the C-terminal section; belongs to the transferase hexapeptide repeat family. Homotrimer. Requires Mg(2+) as cofactor.

It localises to the cytoplasm. It catalyses the reaction alpha-D-glucosamine 1-phosphate + acetyl-CoA = N-acetyl-alpha-D-glucosamine 1-phosphate + CoA + H(+). The enzyme catalyses N-acetyl-alpha-D-glucosamine 1-phosphate + UTP + H(+) = UDP-N-acetyl-alpha-D-glucosamine + diphosphate. Its pathway is nucleotide-sugar biosynthesis; UDP-N-acetyl-alpha-D-glucosamine biosynthesis; N-acetyl-alpha-D-glucosamine 1-phosphate from alpha-D-glucosamine 6-phosphate (route II): step 2/2. It functions in the pathway nucleotide-sugar biosynthesis; UDP-N-acetyl-alpha-D-glucosamine biosynthesis; UDP-N-acetyl-alpha-D-glucosamine from N-acetyl-alpha-D-glucosamine 1-phosphate: step 1/1. It participates in bacterial outer membrane biogenesis; LPS lipid A biosynthesis. Functionally, catalyzes the last two sequential reactions in the de novo biosynthetic pathway for UDP-N-acetylglucosamine (UDP-GlcNAc). The C-terminal domain catalyzes the transfer of acetyl group from acetyl coenzyme A to glucosamine-1-phosphate (GlcN-1-P) to produce N-acetylglucosamine-1-phosphate (GlcNAc-1-P), which is converted into UDP-GlcNAc by the transfer of uridine 5-monophosphate (from uridine 5-triphosphate), a reaction catalyzed by the N-terminal domain. This chain is Bifunctional protein GlmU, found in Neisseria gonorrhoeae.